Here is a 227-residue protein sequence, read N- to C-terminus: IVGGEDANVQDHPFTVALVTPDGQQFCGGTLAAPNKVVTAAHCTVGSQPADINVVSGRTVMSSNIGTVSKVTNVWVHPEYQDAAKGFDVSVLTLEAPVKEAPIELAKADDAGYAPDTAATILGWGNTSEGGQQADHLQKATVPVNSDDTCKQAYGEYTPNAMVCAGVPEGGVDTCQGDSGGPMVVNNKLIGVTSWGEGCARPGKPGVYARVGAYYDVLMEQINAGAV.

Residues 1–223 form the Peptidase S1 domain; that stretch reads IVGGEDANVQ…YYDVLMEQIN (223 aa). An intrachain disulfide couples cysteine 27 to cysteine 43. Residues histidine 42 and aspartate 88 each act as charge relay system in the active site. Cystine bridges form between cysteine 150–cysteine 164 and cysteine 175–cysteine 199. Catalysis depends on serine 179, which acts as the Charge relay system.

Belongs to the peptidase S1 family.

The enzyme catalyses Preferential cleavage: Arg-|-Xaa, Lys-|-Xaa.. This Saccharopolyspora erythraea (Streptomyces erythraeus) protein is Trypsin.